Here is a 358-residue protein sequence, read N- to C-terminus: 4-hydroxybenzoate polyprenyltransferase, mitochondrial (358 aa).

The N-terminal 20 residues, 1-20, are a transit peptide targeting the mitochondrion; that stretch reads MIIKPIASPARYFLRTPSWS. 7 helical membrane passes run 76 to 96, 107 to 127, 154 to 174, 202 to 222, 229 to 249, 275 to 295, and 336 to 356; these read TGTY…AYAY, LALF…INDL, AISL…QLNP, VVLG…LAGE, VVAP…TIYA, VLCG…IMNG, and NTGY…SFIY.

The protein belongs to the UbiA prenyltransferase family. Mg(2+) serves as cofactor.

Its subcellular location is the mitochondrion. It is found in the mitochondrion inner membrane. It carries out the reaction an all-trans-polyprenyl diphosphate + 4-hydroxybenzoate = a 4-hydroxy-3-(all-trans-polyprenyl)benzoate + diphosphate. It functions in the pathway cofactor biosynthesis; ubiquinone biosynthesis. Catalyzes the prenylation of para-hydroxybenzoate (PHB) with an all-trans polyprenyl group. Mediates the second step in the final reaction sequence of coenzyme Q (CoQ) biosynthesis, which is the condensation of the polyisoprenoid side chain with PHB, generating the first membrane-bound Q intermediate. This Schizosaccharomyces pombe (strain 972 / ATCC 24843) (Fission yeast) protein is 4-hydroxybenzoate polyprenyltransferase, mitochondrial.